A 520-amino-acid polypeptide reads, in one-letter code: Biotinidase (520 aa).

Residues 1–21 (MSGARTAPALFFLGCSALALG) form the signal peptide. Positions 49-333 (NPLELVSRQE…TGNTTSEMDP (285 aa)) constitute a CN hydrolase domain. Glu89 (proton acceptor) is an active-site residue. N-linked (GlcNAc...) asparagine glycans are attached at residues Asn96, Asn127, and Asn180. Lys189 serves as the catalytic Proton donor. Catalysis depends on Cys222, which acts as the Nucleophile. Residues Asn326, Asn379, and Asn466 are each glycosylated (N-linked (GlcNAc...) asparagine).

The protein belongs to the carbon-nitrogen hydrolase superfamily. BTD/VNN family.

It is found in the secreted. It localises to the extracellular space. It catalyses the reaction biocytin + H2O = biotin + L-lysine. The catalysed reaction is biotin amide + H2O = biotin + NH4(+). In terms of biological role, catalytic release of biotin from biocytin, the product of biotin-dependent carboxylases degradation. This is Biotinidase (Btd) from Mus musculus (Mouse).